Here is a 319-residue protein sequence, read N- to C-terminus: MMVLKVEELVTGKKNGNGEAGEFLPEDFRDGEYEAAVTLEKQEDLKTLLAHPVTLGEQQWKSEKQREAELKKKKLEQRSKLENLEDLEIIIQLKKRKKYRKTKVPVVKEPEPEIITEPVDVPTFLKAALENKLPVVEKFLSDKNNPDVCDEYKRTALHRACLEGHLAIVEKLMEAGAQIEFRDMLESTAIHWASRGGNLDVLKLLLNKGAKISARDKLLSTALHVAVRTGHYECAEHLIACEADLNAKDREGDTPLHDAVRLNRYKMIRLLIMYGADLNIKNCAGKTPMDLVLHWQNGTKAIFDSLRENSYKTSRIATF.

The stretch at 61-89 (KSEKQREAELKKKKLEQRSKLENLEDLEI) forms a coiled coil. ANK repeat units follow at residues 152–181 (YKRTALHRACLEGHLAIVEKLMEAGAQIEF), 185–214 (LESTAIHWASRGGNLDVLKLLLNKGAKISA), 218–247 (LLSTALHVAVRTGHYECAEHLIACEADLNA), 251–280 (EGDTPLHDAVRLNRYKMIRLLIMYGADLNI), and 284–315 (AGKTPMDLVLHWQNGTKAIFDSLRENSYKTSR).

In terms of assembly, interacts with YBX1. Interacts with TTN/titin. As to expression, mainly expressed in activated vascular endothelial cells. To a lower extent, also expressed in hepatoma cells.

Its subcellular location is the nucleus. May play an important role in endothelial cell activation. May act as a nuclear transcription factor that negatively regulates the expression of cardiac genes. Induction seems to be correlated with apoptotic cell death in hepatoma cells. The sequence is that of Ankyrin repeat domain-containing protein 1 (ANKRD1) from Homo sapiens (Human).